Consider the following 200-residue polypeptide: Protein GrpE (200 aa).

Over residues 1–10 the composition is skewed to basic and acidic residues; sequence MQEKDSKDVT. The tract at residues 1–57 is disordered; sequence MQEKDSKDVTMEDEETIASQEEIEVEGNSEESSKEEESNNSEISDENLSEENLKLKD. Residues 11–29 are compositionally biased toward acidic residues; it reads MEDEETIASQEEIEVEGNS.

Belongs to the GrpE family. As to quaternary structure, homodimer.

It localises to the cytoplasm. Participates actively in the response to hyperosmotic and heat shock by preventing the aggregation of stress-denatured proteins, in association with DnaK and GrpE. It is the nucleotide exchange factor for DnaK and may function as a thermosensor. Unfolded proteins bind initially to DnaJ; upon interaction with the DnaJ-bound protein, DnaK hydrolyzes its bound ATP, resulting in the formation of a stable complex. GrpE releases ADP from DnaK; ATP binding to DnaK triggers the release of the substrate protein, thus completing the reaction cycle. Several rounds of ATP-dependent interactions between DnaJ, DnaK and GrpE are required for fully efficient folding. In Clostridium acetobutylicum (strain ATCC 824 / DSM 792 / JCM 1419 / IAM 19013 / LMG 5710 / NBRC 13948 / NRRL B-527 / VKM B-1787 / 2291 / W), this protein is Protein GrpE.